The primary structure comprises 526 residues: Meiotically up-regulated gene 99 protein, mitochondrial (526 aa).

2 helical membrane passes run 398 to 418 and 421 to 441; these read TLYT…LYFV and FSLY…LYYL.

Its subcellular location is the mitochondrion membrane. Functionally, required for correct meiotic chromosome segregation. Appears to also have role in sporulation. The polypeptide is Meiotically up-regulated gene 99 protein, mitochondrial (mug99) (Schizosaccharomyces pombe (strain 972 / ATCC 24843) (Fission yeast)).